The following is a 160-amino-acid chain: Deoxyuridine 5'-triphosphate nucleotidohydrolase (160 aa).

Residues 79–81, N92, 96–98, and K106 contribute to the substrate site; these read RSG and TVD.

Belongs to the dUTPase family. The cofactor is Mg(2+).

The enzyme catalyses dUTP + H2O = dUMP + diphosphate + H(+). Its pathway is pyrimidine metabolism; dUMP biosynthesis; dUMP from dCTP (dUTP route): step 2/2. This enzyme is involved in nucleotide metabolism: it produces dUMP, the immediate precursor of thymidine nucleotides and it decreases the intracellular concentration of dUTP so that uracil cannot be incorporated into DNA. In Sinorhizobium medicae (strain WSM419) (Ensifer medicae), this protein is Deoxyuridine 5'-triphosphate nucleotidohydrolase.